Consider the following 348-residue polypeptide: Dihydroorotase (348 aa).

2 residues coordinate Zn(2+): His-17 and His-19. Residues 19–21 (HLR) and Asn-45 each bind substrate. Zn(2+)-binding residues include Lys-103, His-140, and His-178. N6-carboxylysine is present on Lys-103. His-140 is a binding site for substrate. Leu-223 serves as a coordination point for substrate. Asp-251 contributes to the Zn(2+) binding site. Asp-251 is an active-site residue. Residues His-255 and Ala-267 each coordinate substrate.

It belongs to the metallo-dependent hydrolases superfamily. DHOase family. Class II DHOase subfamily. As to quaternary structure, homodimer. Zn(2+) is required as a cofactor.

It carries out the reaction (S)-dihydroorotate + H2O = N-carbamoyl-L-aspartate + H(+). The protein operates within pyrimidine metabolism; UMP biosynthesis via de novo pathway; (S)-dihydroorotate from bicarbonate: step 3/3. In terms of biological role, catalyzes the reversible cyclization of carbamoyl aspartate to dihydroorotate. This chain is Dihydroorotase, found in Escherichia coli O139:H28 (strain E24377A / ETEC).